Reading from the N-terminus, the 126-residue chain is MSKLEKLVEELSALSVLEAADLSKLLEEKWGVSAAAPVAAAGPAAAAAPAEAAEEQTEFTVVLTAGGDKKINVIKEVRGVRPDLGLKEAKDLVEGAPQNVVENVSKQVAEEIAKKLTEAGATVQVK.

The protein belongs to the bacterial ribosomal protein bL12 family. As to quaternary structure, homodimer. Part of the ribosomal stalk of the 50S ribosomal subunit. Forms a multimeric L10(L12)X complex, where L10 forms an elongated spine to which 2 to 4 L12 dimers bind in a sequential fashion. Binds GTP-bound translation factors.

In terms of biological role, forms part of the ribosomal stalk which helps the ribosome interact with GTP-bound translation factors. Is thus essential for accurate translation. The polypeptide is Large ribosomal subunit protein bL12 (Caulobacter sp. (strain K31)).